A 253-amino-acid chain; its full sequence is Complement C1q subcomponent subunit B (253 aa).

Positions 1–25 (MKTQWGEVWTHLLLLLLGFLHVSWA) are cleaved as a signal peptide. Gln26 is modified (pyrrolidone carboxylic acid). A Collagen-like domain is found at 29–112 (CTGPPGIPGI…GPRGPKGDSG (84 aa)). 5 positions are modified to 4-hydroxyproline: Pro33, Pro36, Pro39, Pro51, and Pro54. Positions 35-115 (IPGIPGVPGV…GPKGDSGDYG (81 aa)) are disordered. 2 positions are modified to 5-hydroxylysine: Lys57 and Lys60. The residue at position 63 (Pro63) is a 4-hydroxyproline. Lys75 is subject to 5-hydroxylysine. The segment covering 78-96 (PGIPGTPGKVGPKGPVGPK) has biased composition (low complexity). Residues Pro81 and Pro84 each carry the 4-hydroxyproline modification. Residues Lys90 and Lys96 each carry the 5-hydroxylysine modification. The residue at position 99 (Pro99) is a 4-hydroxyproline. 5-hydroxylysine is present on Lys108. The C1q domain maps to 115-253 (GATQKVAFSA…GFLLFPDMDA (139 aa)). The cysteines at positions 179 and 198 are disulfide-linked. 3 residues coordinate Ca(2+): Asp199, Tyr200, and Gln206.

In terms of assembly, core component of the complement C1 complex, a calcium-dependent complex composed of 1 molecule of the C1Q subcomplex, 2 molecules of C1R and 2 molecules of C1S. The C1Q subcomplex is composed 18 subunits: 3 chains of C1QA, C1QB, and C1QC trimerize to form 6 collagen-like triple helices connected to six globular ligand-recognition modules (C1q domain). Post-translationally, hydroxylated on lysine and proline residues. Hydroxylated lysine residues can be glycosylated. Mouse C1Q contains up to 64.0 hydroxylysine-galactosylglucose residues. Total percentage hydroxylysine residues glycosylated is 95.1%. Contains no hydroxylysine-monosaccharides. Highest expression in thioglycolate-activated peritoneal macrophages. Also found in spleen, thymus and heart. Very weak expression liver, kidney, lung and intestine.

Its subcellular location is the secreted. The protein localises to the cell surface. The C1Q subcomplex is inhibited by sulfated molecules, such as triterpenoid sulfates, heparan sulfate, or chondroitin sulfates. Core component of the complement C1 complex, a multiprotein complex that initiates the classical pathway of the complement system, a cascade of proteins that leads to phagocytosis and breakdown of pathogens and signaling that strengthens the adaptive immune system. The classical complement pathway is initiated by the C1Q subcomplex of the C1 complex, which specifically binds IgG or IgM immunoglobulins complexed with antigens, forming antigen-antibody complexes on the surface of pathogens: C1QA, together with C1QB and C1QC, specifically recognizes and binds the Fc regions of IgG or IgM via its C1q domain. Immunoglobulin-binding activates the proenzyme C1R, which cleaves C1S, initiating the proteolytic cascade of the complement system. The C1Q subcomplex is activated by a hexamer of IgG complexed with antigens, while it is activated by a pentameric IgM. The C1Q subcomplex also recognizes and binds phosphatidylserine exposed on the surface of cells undergoing programmed cell death, possibly promoting activation of the complement system. The chain is Complement C1q subcomponent subunit B from Mus musculus (Mouse).